The following is a 429-amino-acid chain: Enolase (429 aa).

Q163 provides a ligand contact to (2R)-2-phosphoglycerate. The active-site Proton donor is the E205. Mg(2+) contacts are provided by D242, E287, and D314. Residues K339, R368, S369, and K390 each coordinate (2R)-2-phosphoglycerate. K339 serves as the catalytic Proton acceptor.

It belongs to the enolase family. Mg(2+) is required as a cofactor.

It is found in the cytoplasm. It localises to the secreted. Its subcellular location is the cell surface. The enzyme catalyses (2R)-2-phosphoglycerate = phosphoenolpyruvate + H2O. It functions in the pathway carbohydrate degradation; glycolysis; pyruvate from D-glyceraldehyde 3-phosphate: step 4/5. Functionally, catalyzes the reversible conversion of 2-phosphoglycerate (2-PG) into phosphoenolpyruvate (PEP). It is essential for the degradation of carbohydrates via glycolysis. The sequence is that of Enolase from Cupriavidus taiwanensis (strain DSM 17343 / BCRC 17206 / CCUG 44338 / CIP 107171 / LMG 19424 / R1) (Ralstonia taiwanensis (strain LMG 19424)).